A 303-amino-acid polypeptide reads, in one-letter code: Probable cell division protein WhiA (303 aa).

Positions 272–303 (SIQQVADALEFPITKSGVNHRLRKINKIADDL) form a DNA-binding region, H-T-H motif.

This sequence belongs to the WhiA family.

In terms of biological role, involved in cell division and chromosome segregation. In Streptococcus pyogenes serotype M12 (strain MGAS2096), this protein is Probable cell division protein WhiA.